Reading from the N-terminus, the 183-residue chain is U3 small nucleolar ribonucleoprotein protein imp3 (183 aa).

The region spanning 108-174 (RRLPVVMRNI…IKKHVMDYNN (67 aa)) is the S4 RNA-binding domain.

Belongs to the universal ribosomal protein uS4 family. As to quaternary structure, component of a heterotrimeric complex containing imp3, imp4 and mpp10.

Its subcellular location is the nucleus. It localises to the nucleolus. In terms of biological role, component of the U3 small nucleolar ribonucleoprotein. Required for the early cleavages at sites A0, A1 and A2 during 18S ribosomal pre-RNA processing. In Caenorhabditis elegans, this protein is U3 small nucleolar ribonucleoprotein protein imp3.